A 135-amino-acid chain; its full sequence is Ribonuclease VapC26 (135 aa).

The PINc domain maps to 1 to 118; it reads MIIDTSALLA…TRTILTLDRR (118 aa). Residues aspartate 4 and aspartate 97 each contribute to the Mg(2+) site.

The protein belongs to the PINc/VapC protein family. Mg(2+) is required as a cofactor.

Functionally, toxic component of a type II toxin-antitoxin (TA) system. An RNase. Upon expression in M.smegmatis inhibits colony formation. Its toxic effect is neutralized by coexpression with cognate antitoxin VapB26. This is Ribonuclease VapC26 from Mycobacterium tuberculosis (strain ATCC 25618 / H37Rv).